The sequence spans 34 residues: Photosystem II reaction center protein M (34 aa).

A helical transmembrane segment spans residues 5–25; sequence ILAFIATALFILIPTSFLLII.

It belongs to the PsbM family. PSII is composed of 1 copy each of membrane proteins PsbA, PsbB, PsbC, PsbD, PsbE, PsbF, PsbH, PsbI, PsbJ, PsbK, PsbL, PsbM, PsbT, PsbX, PsbY, PsbZ, Psb30/Ycf12, at least 3 peripheral proteins of the oxygen-evolving complex and a large number of cofactors. It forms dimeric complexes. Detected in both etioplasts and green leaves; PSII is only assembled in green leaves.

The protein localises to the plastid. It localises to the chloroplast thylakoid membrane. Functionally, one of the components of the core complex of photosystem II (PSII). PSII is a light-driven water:plastoquinone oxidoreductase that uses light energy to abstract electrons from H(2)O, generating O(2) and a proton gradient subsequently used for ATP formation. It consists of a core antenna complex that captures photons, and an electron transfer chain that converts photonic excitation into a charge separation. This subunit is found at the monomer-monomer interface. The chain is Photosystem II reaction center protein M from Hordeum vulgare (Barley).